The primary structure comprises 435 residues: uncharacterized protein (435 aa).

11 helical membrane passes run 9–29 (IIVLFGSFAIILAVGVPITFA), 57–77 (VGLDGFTLLAIPFFVLAGNIM), 110–130 (TLFGAISGSAVASAAAVGGIM), 146–166 (AINVASAPIGLMIPPSNVLIV), 176–196 (VAALFLAGYLPGILTALALMT), 226–246 (LPSLLLIFIIIGGIIGGVFTP), 280–300 (VVTSSIVLLLVGCSMGMSWAM), 321–341 (WVILLIINLILLFVGTFMDIT), 343–363 (AILIFTPIFLPIAQHLGIDPV), 367–387 (IIMVFNLTIGLCTPPVGTILF), and 408–428 (FLALFVVMAMICYFPQLSLLL).

The protein belongs to the YiaN/YgiK family.

Its subcellular location is the cell inner membrane. This is an uncharacterized protein from Salmonella typhimurium (strain LT2 / SGSC1412 / ATCC 700720).